Consider the following 783-residue polypeptide: Metabotropic glutamate receptor-like protein J (783 aa).

Positions 1 to 20 are cleaved as a signal peptide; that stretch reads MKILLYIAIILSFFSLITIS. Over 21-383 the chain is Extracellular; sequence SECKIAVLLS…DYPNSLKYGV (363 aa). Residues 56 to 85 adopt a coiled-coil conformation; it reads DFSIYYENLEESMEEAEKAFQDALHKGANL. N-linked (GlcNAc...) asparagine glycosylation is found at N181, N196, N256, N282, and N315. A helical transmembrane segment spans residues 384 to 404; it reads TIVSGVCIFICLVCMTLVVVF. The Cytoplasmic segment spans residues 405–415; that stretch reads KKARVIKSSSP. The chain crosses the membrane as a helical span at residues 416–436; it reads AFLLLILLGCCIIFAACILFA. At 437–443 the chain is on the extracellular side; sequence QSPTNQT. The N-linked (GlcNAc...) asparagine glycan is linked to N441. The helical transmembrane segment at 444-464 threads the bilayer; that stretch reads CSARIWLLSLGYTLFLGNLLV. Residues 465–489 are Cytoplasmic-facing; that stretch reads KNWRIWLLFDNPKLKKRAITNWKLY. A helical membrane pass occupies residues 490 to 510; that stretch reads PWVFAILAIDVMILAIWQGLG. Residues 511–538 are Extracellular-facing; the sequence is NINAESRIGYDSLTQYQYKNVCSSDDQG. A helical membrane pass occupies residues 539–559; that stretch reads SIALYLLLVFHGLVLLVACFI. Residues 560–575 lie on the Cytoplasmic side of the membrane; sequence SFKIKVVDIEEFNESK. The chain crosses the membrane as a helical span at residues 576-596; it reads PITTSVYIITFCLFIVIPLMV. Residues 597–604 lie on the Extracellular side of the membrane; sequence SPQSLTSQ. A helical transmembrane segment spans residues 605-625; sequence TTIICVCAIVTTLISMLLLFG. At 626 to 783 the chain is on the cytoplasmic side; sequence SKFYKMATQG…GETEIDSNNV (158 aa). Positions 647-656 are enriched in low complexity; that stretch reads KSSSKSSKSS. Disordered stretches follow at residues 647 to 696 and 731 to 783; these read KSSS…FSNK and QLQQ…SNNV. The segment covering 670–679 has biased composition (acidic residues); that stretch reads GEDDTSDETS. The span at 763 to 783 shows a compositional bias: polar residues; it reads VLSKRISNQQNGETEIDSNNV.

The protein in the N-terminal section; belongs to the BMP lipoprotein family. It in the C-terminal section; belongs to the G-protein coupled receptor 3 family. GABA-B receptor subfamily.

Its subcellular location is the cell membrane. The protein resides in the membrane. The protein localises to the endoplasmic reticulum membrane. It is found in the golgi apparatus membrane. It localises to the nucleus envelope. Functionally, may act during the development and be a negative regulator. The chain is Metabotropic glutamate receptor-like protein J (grlJ) from Dictyostelium discoideum (Social amoeba).